Here is a 276-residue protein sequence, read N- to C-terminus: Glutamate racemase (276 aa).

Substrate-binding positions include 12–13 (DS) and 44–45 (YG). Cys-76 functions as the Proton donor/acceptor in the catalytic mechanism. Position 77–78 (77–78 (NT)) interacts with substrate. The Proton donor/acceptor role is filled by Cys-187. 188–189 (TH) provides a ligand contact to substrate.

It belongs to the aspartate/glutamate racemases family.

The catalysed reaction is L-glutamate = D-glutamate. It participates in cell wall biogenesis; peptidoglycan biosynthesis. Functionally, provides the (R)-glutamate required for cell wall biosynthesis. The protein is Glutamate racemase of Granulibacter bethesdensis (strain ATCC BAA-1260 / CGDNIH1).